Reading from the N-terminus, the 880-residue chain is Valine--tRNA ligase (880 aa).

A 'HIGH' region motif is present at residues 51-61; sequence PNVTGELHLGH. Residues 529–533 carry the 'KMSKS' region motif; that stretch reads KMSKT. K532 is a binding site for ATP. Residues 815 to 854 are a coiled coil; the sequence is MSTMVDLEAEAKRVEAEIAELETQIERLSARLSDTQFLAK.

This sequence belongs to the class-I aminoacyl-tRNA synthetase family. ValS type 1 subfamily. As to quaternary structure, monomer.

The protein localises to the cytoplasm. It catalyses the reaction tRNA(Val) + L-valine + ATP = L-valyl-tRNA(Val) + AMP + diphosphate. Its function is as follows. Catalyzes the attachment of valine to tRNA(Val). As ValRS can inadvertently accommodate and process structurally similar amino acids such as threonine, to avoid such errors, it has a 'posttransfer' editing activity that hydrolyzes mischarged Thr-tRNA(Val) in a tRNA-dependent manner. The polypeptide is Valine--tRNA ligase (Dehalococcoides mccartyi (strain ATCC BAA-2266 / KCTC 15142 / 195) (Dehalococcoides ethenogenes (strain 195))).